The sequence spans 150 residues: MKVAITNRQKRHPIGTRRLRKVAETILGALGYPDSELSVVITGDLGIRRVNRDYLGKDRPTNVISFAMGEGDFGDLNPDVLGDVIISADTAAREAEEAGIAFWSRLCFLLLHGTLHITGYDHERSGEAEARRMEAKEREIFALLENGGLV.

Residues histidine 112, histidine 116, and histidine 122 each contribute to the Zn(2+) site.

It belongs to the endoribonuclease YbeY family. It depends on Zn(2+) as a cofactor.

The protein localises to the cytoplasm. Single strand-specific metallo-endoribonuclease involved in late-stage 70S ribosome quality control and in maturation of the 3' terminus of the 16S rRNA. This is Endoribonuclease YbeY from Geobacter sulfurreducens (strain ATCC 51573 / DSM 12127 / PCA).